Reading from the N-terminus, the 179-residue chain is Large ribosomal subunit protein uL6 (179 aa).

This sequence belongs to the universal ribosomal protein uL6 family. Part of the 50S ribosomal subunit.

Its function is as follows. This protein binds to the 23S rRNA, and is important in its secondary structure. It is located near the subunit interface in the base of the L7/L12 stalk, and near the tRNA binding site of the peptidyltransferase center. The protein is Large ribosomal subunit protein uL6 of Mycobacterium tuberculosis (strain ATCC 25618 / H37Rv).